Here is a 117-residue protein sequence, read N- to C-terminus: Immunoglobulin lambda variable 6-57 (117 aa).

The signal sequence occupies residues 1–19 (MAWAPLLLTLLAHCTGSWA). Residues 20–44 (NFMLTQPHSVSESPGKTVTISCTGS) form a framework-1 region. The Ig-like domain maps to 20 to 117 (NFMLTQPHSV…YYCQSYDSSN (98 aa)). Cysteines 41 and 110 form a disulfide. The complementarity-determining-1 stretch occupies residues 45–52 (SGSIASNY). Residues 53-69 (VQWYQQRPGSAPTTVIY) are framework-2. The segment at 65–97 (TTVIYEDNQRPSGVPDRFSGSIDSSSNSASLTI) is disordered. The tract at residues 70-72 (EDN) is complementarity-determining-2. Residues 73–110 (QRPSGVPDRFSGSIDSSSNSASLTISGLKTEDEADYYC) form a framework-3 region. Residues 83–97 (SGSIDSSSNSASLTI) are compositionally biased toward low complexity. The complementarity-determining-3 stretch occupies residues 111–117 (QSYDSSN).

As to quaternary structure, immunoglobulins are composed of two identical heavy chains and two identical light chains; disulfide-linked.

Its subcellular location is the secreted. It is found in the cell membrane. Functionally, v region of the variable domain of immunoglobulin light chains that participates in the antigen recognition. Immunoglobulins, also known as antibodies, are membrane-bound or secreted glycoproteins produced by B lymphocytes. In the recognition phase of humoral immunity, the membrane-bound immunoglobulins serve as receptors which, upon binding of a specific antigen, trigger the clonal expansion and differentiation of B lymphocytes into immunoglobulins-secreting plasma cells. Secreted immunoglobulins mediate the effector phase of humoral immunity, which results in the elimination of bound antigens. The antigen binding site is formed by the variable domain of one heavy chain, together with that of its associated light chain. Thus, each immunoglobulin has two antigen binding sites with remarkable affinity for a particular antigen. The variable domains are assembled by a process called V-(D)-J rearrangement and can then be subjected to somatic hypermutations which, after exposure to antigen and selection, allow affinity maturation for a particular antigen. In Homo sapiens (Human), this protein is Immunoglobulin lambda variable 6-57.